Consider the following 6793-residue polypeptide: Replicase polyprotein 1ab (6793 aa).

The 108-residue stretch at 2 to 109 (ASNHISLAFA…ELDLVFGRCG (108 aa)) folds into the CoV Nsp1 globular domain. The CoV Nsp2 N-terminal domain occupies 112-368 (TIPVDQFMCG…TKFKFQLLAN (257 aa)). A CoV Nsp2 middle domain is found at 396 to 785 (ILGLPWFVKK…LDTVTSFIKV (390 aa)). In terms of domain architecture, CoV Nsp2 C-terminal spans 776–897 (LDTVTSFIKV…VASCFKKKGG (122 aa)). A Ubiquitin-like 1 domain is found at 898 to 993 (GVVTISDEVQ…IMVSQWPLSS (96 aa)). Residues 1069–1302 (AFIEDKPVVV…SCDVKPFLTY (234 aa)) form the Peptidase C16 1 domain. Cys1103 (for PL1-PRO activity) is an active-site residue. A C4-type 1; degenerate zinc finger spans residues 1174-1205 (CGCGPGVRVYENAIFRFTPLKTAFPMGRCLIC). Active-site for PL1-PRO activity residues include His1252 and Asp1265. The region spanning 1303–1467 (KNIEFYQGEL…FQTEQPVEPL (165 aa)) is the Macro domain. The Ubiquitin-like 2 domain maps to 1638-1693 (AKPVQVVVTQDQRSFHTVELSTSQTYGQQLGDCVVEDKKVTNLKPVSKDKVVSVVP). Positions 1699–1965 (KHYGFVDAGI…FLDTMNVASE (267 aa)) constitute a Peptidase C16 2 domain. Cys1737 acts as the For PL2-PRO activity in catalysis. The segment at 1816-1849 (TTCDGTCSTKRVVSTPVVNASVLKVGLDDGNCVH) adopts a C4-type 2; degenerate zinc-finger fold. Catalysis depends on for PL2-PRO activity residues His1902 and Asp1915. Transmembrane regions (helical) follow at residues 1973-1993 (FVSRNIIVLIVYLFSLLAICF) and 2036-2056 (YIKVFLKFSLVLYTLYALMFM). The HD1 stretch occupies residues 1973–2184 (FVSRNIIVLI…MGNIIVVAFI (212 aa)). Residues 2052–2116 (ALMFMFIRFT…TRVIWQHLKD (65 aa)) enclose the 3Ecto domain. 2 disulfides stabilise this stretch: Cys2068–Cys2094 and Cys2086–Cys2091. The next 3 membrane-spanning stretches (helical) occupy residues 2119 to 2139 (IGNILPLFYLVFLIIFGGFFV), 2141 to 2161 (IGITYFIMQYINAAGVALGYQ), and 2164 to 2184 (VWLLHLLPFNSMGNIIVVAFI). Positions 2190-2280 (LFLKHVLFGC…VTKLNVIPTG (91 aa)) are Y1. A CoV Nsp3 Y domain is found at 2190–2530 (LFLKHVLFGC…PTISVANKKG (341 aa)). Zn(2+)-binding residues include His2194, Cys2199, Cys2204, Cys2207, Cys2240, His2243, Cys2247, and Cys2250. A ZF1 region spans residues 2194 to 2207 (HVLFGCDKPSCIAC). A ZF2 region spans residues 2240–2250 (CKKHNFFCVDC). The tract at residues 2281–2370 (PATIIIDKVE…LVDSALLASL (90 aa)) is Y2. The segment at 2281–2530 (PATIIIDKVE…PTISVANKKG (250 aa)) is coV-Y. Residues 2371 to 2428 (NVDFSANLHKAFVEVLSNSFGKDLSNCSNMNECRESLGLSDVPEEEFSAAVSEAHRYD) are Y3. The Y4 stretch occupies residues 2429-2530 (VLISDVSFNN…PTISVANKKG (102 aa)). 7 consecutive transmembrane segments (helical) span residues 2543–2563 (FFWHLCVLIVVLFVATSLLDF), 2634–2654 (VPAGVFLYGKSLIFAMSTIFG), 2669–2689 (DSCIFNSACTTLSGIGGRNVY), 2769–2789 (GSDYVCGTGFFSLLFNVIGMF), 2802–2822 (ILLNCVVAFTAVMACFAFTKF), 2829–2849 (MSFGVLSVGLCTVVNNLSYVV), and 2878–2898 (VGFAISYCFLAPWWVVLAYLI). The interval 2543 to 2898 (FFWHLCVLIV…PWWVVLAYLI (356 aa)) is HD2. In terms of domain architecture, Nsp4C spans 2917-3012 (LFEGDKFVGS…PTVSYNSTLQ (96 aa)). The Peptidase C30 domain occupies 3013–3314 (AGLRKMAQPS…VKQMYGVTLQ (302 aa)). Catalysis depends on for 3CL-PRO activity residues His3053 and Cys3156. The next 7 helical transmembrane spans lie at 3351 to 3371 (GYITPVFLAIIVASSALMLLV), 3376 to 3396 (LFLQLYLLPSLCIVSGYNIFK), 3414 to 3434 (FGGFNVTGVLNISLCCFVMGL), 3443 to 3463 (PNKIFSYVVAVLTVLYTYYYS), 3466 to 3486 (VLGLILTSMSGFTNYWFIGTA), 3488 to 3507 (YKLATYVLPHTSLLDSFDAI), and 3511 to 3531 (VFLYLLLGYCNCVYYGSLYWI). Residues 3351–3531 (GYITPVFLAI…CVYYGSLYWI (181 aa)) are HD3. A RdRp Nsp7 cofactor domain is found at 3591 to 3673 (SKLTDLKCTN…SYFNDSSVLQ (83 aa)). Residues 3674-3868 (SVAATYVNLP…LNCERIIKLQ (195 aa)) enclose the RdRp Nsp8 cofactor domain. Residues 3869–3976 (NNEIIPSKIK…GFIGATVRLQ (108 aa)) form the Nsp9 ssRNA-binding domain. The 139-residue stretch at 3977 to 4115 (AGKQTEQATN…DRAVIQSVDS (139 aa)) folds into the ExoN/MTase coactivator domain. Positions 4050, 4053, 4059, 4066, 4092, 4095, 4103, and 4105 each coordinate Zn(2+). 2 zinc fingers span residues 4050–4066 (CLYCRAHVEHPDMDGFC) and 4092–4105 (CKVCGCWQANGCTC). One can recognise a NiRAN domain in the interval 4117–4366 (YLNRVRGSSA…ASECFIKSDI (250 aa)). In terms of domain architecture, Nsp12 Interface spans 4372 to 4470 (RTFDLLAYDF…WNKDLNLHSS (99 aa)). Residues His4401, Cys4407, Cys4412, Cys4416, and Cys4593 each coordinate Zn(2+). The region spanning 4471–5038 (RLTINELLQF…SMYEQSSVLQ (568 aa)) is the Nsp12 RNA-dependent RNA polymerase domain. Residues 4473-4687 (TINELLQFCA…HQKHLKSIVN (215 aa)) form a rdRp Fingers N-ter region. The tract at residues 4688-4726 (TRGASVVIGTTKFYGGWDNMLKTLIKDVENPHLMGWDYP) is rdRp Palm N-ter. One can recognise a RdRp catalytic domain in the interval 4718 to 4880 (PHLMGWDYPK…CYNSEYAALG (163 aa)). A rdRp Fingers C-ter region spans residues 4727-4785 (KCDRALPNMIRMISAMILGSKHVNCCSSSDRYYRLCNELAQVLTEMVYSNGGFYVKPGG). The Zn(2+) site is built by His4748, Cys4751, and Cys4752. Residues 4786–4921 (TTSGDATTAY…NKGPHEFCSQ (136 aa)) are rdRp Palm C-ter. Active-site residues include Ser4865, Asp4866, and Asp4867. The interval 4922 to 5038 (HTMQIVDKDG…SMYEQSSVLQ (117 aa)) is rdRp Thumb. A CV ZBD domain is found at 5039–5151 (SAGLCVVCSS…DDFNTLATSD (113 aa)). Zn(2+) contacts are provided by Cys5043, Cys5046, Cys5054, Cys5057, Cys5064, Cys5067, His5071, His5077, Cys5088, Cys5093, Cys5110, and His5113. The (+)RNA virus helicase ATP-binding domain occupies 5296–5477 (NIHEDYSNLI…MCVLKPDIFL (182 aa)). 5321–5328 (GPPGSGKS) serves as a coordination point for ATP. The 170-residue stretch at 5478-5647 (HKCYRCPAEI…DGCGLFKDCY (170 aa)) folds into the (+)RNA virus helicase C-terminal domain. One can recognise an ExoN domain in the interval 5707-5921 (LFCTRDFAMR…RCLAIHDCFV (215 aa)). Catalysis depends on residues Asp5725, Glu5727, and Glu5826. 7 residues coordinate Zn(2+): Cys5842, Cys5844, Cys5860, His5863, His5891, Cys5895, and His5898. Catalysis depends on residues His5902 and Asp5907. Cys5913 contacts Zn(2+). The N7-MTase domain maps to 5930–6151 (YPFIANEQAI…NLWQTFKNSN (222 aa)). 5965–5971 (DVGNPKG) is a binding site for S-adenosyl-L-methionine. The interval 6042-6056 (CNGGSLYVNNHAFHT) is gpppA-binding. Zn(2+) is bound by residues Cys6080, Cys6097, Cys6108, and His6111. Residues 6154–6214 (GLENIAYNVV…NVAFELYAKR (61 aa)) enclose the Nsp15 N-terminal oligomerization domain. The 118-residue stretch at 6215-6332 (KVGLTPPLTI…IYTRKDGAFV (118 aa)) folds into the AV-Nsp11N/CoV-Nsp15M domain. The NendoU domain occupies 6349–6489 (QPRSNMEEDF…KDHKVQTFYP (141 aa)). Catalysis depends on residues His6379, His6394, Lys6435, Lys6537, Asp6621, Lys6661, and Glu6694. Positions 6493 to 6789 (SAEWKCGYSM…VVCGFSNHLV (297 aa)) constitute a Nidovirus-type SAM-dependent 2'-O-MTase domain.

Belongs to the coronaviruses polyprotein 1ab family. In terms of assembly, 3CL-PRO exists as monomer and homodimer. Eight copies of nsp7 and eight copies of nsp8 assemble to form a heterohexadecamer. Nsp9 is a dimer. Nsp10 forms a dodecamer. Mn(2+) serves as cofactor. Post-translationally, specific enzymatic cleavages in vivo by its own proteases yield mature proteins. 3CL-PRO and PL-PRO proteinases are autocatalytically processed.

Its subcellular location is the host membrane. The protein localises to the host cytoplasm. The protein resides in the host perinuclear region. It localises to the host endoplasmic reticulum-Golgi intermediate compartment. It carries out the reaction Thiol-dependent hydrolysis of ester, thioester, amide, peptide and isopeptide bonds formed by the C-terminal Gly of ubiquitin (a 76-residue protein attached to proteins as an intracellular targeting signal).. The catalysed reaction is RNA(n) + a ribonucleoside 5'-triphosphate = RNA(n+1) + diphosphate. It catalyses the reaction ATP + H2O = ADP + phosphate + H(+). The enzyme catalyses a 5'-end diphospho-ribonucleoside in mRNA + GTP + H(+) = a 5'-end (5'-triphosphoguanosine)-ribonucleoside in mRNA + diphosphate. It carries out the reaction a 5'-end (N(7)-methyl 5'-triphosphoguanosine)-ribonucleoside in mRNA + S-adenosyl-L-methionine = a 5'-end (N(7)-methyl 5'-triphosphoguanosine)-(2'-O-methyl-ribonucleoside) in mRNA + S-adenosyl-L-homocysteine + H(+). The catalysed reaction is uridylyl-uridylyl-ribonucleotide-RNA = a 3'-end uridylyl-2',3'-cyclophospho-uridine-RNA + a 5'-end dephospho-ribonucleoside-RNA. Functionally, the replicase polyprotein of coronaviruses is a multifunctional protein: it contains the activities necessary for the transcription of negative stranded RNA, leader RNA, subgenomic mRNAs and progeny virion RNA as well as proteinases responsible for the cleavage of the polyprotein into functional products. In terms of biological role, the papain-like proteinase 1 (PLP1) and papain-like proteinase 2 (PLP2) are responsible for the cleavages located at the N-terminus of the replicase polyprotein. In addition, PLP2 possesses a deubiquitinating/deISGylating activity and processes both 'Lys-48'- and 'Lys-63'-linked polyubiquitin chains from cellular substrates. PLP2 also antagonizes innate immune induction of type I interferon by blocking the nuclear translocation of host IRF-3. Its function is as follows. Responsible for the majority of cleavages as it cleaves the C-terminus of replicase polyprotein at 11 sites. Recognizes substrates containing the core sequence [ILMVF]-Q-|-[SGACN]. Inhibited by the substrate-analog Cbz-Val-Asn-Ser-Thr-Leu-Gln-CMK. Also contains an ADP-ribose-1''-phosphate (ADRP)-binding function. The helicase which contains a zinc finger structure displays RNA and DNA duplex-unwinding activities with 5' to 3' polarity. ATPase activity is strongly stimulated by poly(U), poly(dT), poly(C), poly(dA), but not by poly(G). Functionally, the exoribonuclease acts on both ssRNA and dsRNA in a 3' to 5' direction. In terms of biological role, nsp7-nsp8 hexadecamer may possibly confer processivity to the polymerase, maybe by binding to dsRNA or by producing primers utilized by the latter. Its function is as follows. Forms a primer, NSP9-pU, which is utilized by the polymerase for the initiation of RNA chains. Interacts with ribosome signal recognition particle RNA (SRP). Together with NSP8, suppress protein integration into the cell membrane, thereby disrupting host immune defenses. RNA-directed RNA polymerase that catalyzes the transcription of viral genomic and subgenomic RNAs. Acts in complex with nsp7 and nsp8 to transcribe both the minus and positive strands of genomic RNA. The kinase-like NiRAN domain of NSP12 attaches one or more nucleotides to the amino terminus of NSP9, forming a covalent RNA-protein intermediate that serves as transcription/replication primer. Subgenomic RNAs (sgRNAs) are formed by discontinuous transcription: The polymerase has the ability to pause at transcription-regulating sequences (TRS) and jump to the leader TRS, resulting in a major deletion. This creates a series of subgenomic RNAs that are replicated, transcribed and translated. In addition, Nsp12 is a subunit of the viral RNA capping enzyme that catalyzes the RNA guanylyltransferase reaction for genomic and sub-genomic RNAs. Subsequently, the NiRAN domain transfers RNA to GDP, and forms the core cap structure GpppA-RNA. Functionally, plays a role in viral transcription/replication and prevents the simultaneous activation of host cell dsRNA sensors, such as MDA5/IFIH1, OAS, and PKR. Acts by degrading the 5'-polyuridines generated during replication of the poly(A) region of viral genomic and subgenomic RNAs. Catalyzes a two-step reaction in which a 2'3'-cyclic phosphate (2'3'-cP) is first generated by 2'-O transesterification, which is then hydrolyzed to a 3'-phosphate (3'-P). If not degraded, poly(U) RNA would hybridize with poly(A) RNA tails and activate host dsRNA sensors. This is Replicase polyprotein 1ab (rep) from Bat coronavirus 512/2005 (BtCoV).